A 291-amino-acid chain; its full sequence is Undecaprenyl-diphosphatase 2 (291 aa).

6 helical membrane-spanning segments follow: residues 39-59 (PGAAFTAITQIGTEAAVLIYF), 85-105 (AQMGWLVIVGSIPIGVLGVTL), 118-138 (ITATMLIVMGVILGIADRLAA), 203-223 (FLLAIPAVLASGVFELKDAAA), 231-251 (PTVFATVIAFVSGYAVIAWFM), and 262-282 (FVWYRIALGIAIIALVATGAL).

The protein belongs to the UppP family.

The protein localises to the cell membrane. It carries out the reaction di-trans,octa-cis-undecaprenyl diphosphate + H2O = di-trans,octa-cis-undecaprenyl phosphate + phosphate + H(+). Catalyzes the dephosphorylation of undecaprenyl diphosphate (UPP). Confers resistance to bacitracin. The polypeptide is Undecaprenyl-diphosphatase 2 (Streptomyces avermitilis (strain ATCC 31267 / DSM 46492 / JCM 5070 / NBRC 14893 / NCIMB 12804 / NRRL 8165 / MA-4680)).